The sequence spans 211 residues: Thymidylate kinase (211 aa).

11–18 (GPDGAGKT) is an ATP binding site.

This sequence belongs to the thymidylate kinase family.

It carries out the reaction dTMP + ATP = dTDP + ADP. Its function is as follows. Phosphorylation of dTMP to form dTDP in both de novo and salvage pathways of dTTP synthesis. This chain is Thymidylate kinase, found in Streptococcus pyogenes serotype M1.